The sequence spans 339 residues: Glucokinase (339 aa).

16–21 (GDIGGT) is an ATP binding site.

Belongs to the bacterial glucokinase family.

It localises to the cytoplasm. It carries out the reaction D-glucose + ATP = D-glucose 6-phosphate + ADP + H(+). This is Glucokinase from Sinorhizobium medicae (strain WSM419) (Ensifer medicae).